Consider the following 396-residue polypeptide: Na(+)/H(+) antiporter NhaA (396 aa).

11 helical membrane-spanning segments follow: residues 17–37 (FSGL…NTNF), 59–79 (FSLT…EIGI), 97–117 (ILPG…YNFI), 127–147 (GWAI…KILG), 156–176 (IFLL…IAFF), 181–201 (IDQY…SINY), 206–226 (CIYI…LSGI), 260–280 (SLSF…NSGI), 292–312 (LLPF…VFLF), 333–353 (IAGI…ISNL), and 368–388 (FSIL…LYFL).

Belongs to the NhaA Na(+)/H(+) (TC 2.A.33) antiporter family.

The protein resides in the cell membrane. It carries out the reaction Na(+)(in) + 2 H(+)(out) = Na(+)(out) + 2 H(+)(in). Na(+)/H(+) antiporter that extrudes sodium in exchange for external protons. This chain is Na(+)/H(+) antiporter NhaA, found in Wigglesworthia glossinidia brevipalpis.